The following is a 327-amino-acid chain: Probable serine/threonine-protein kinase WNK5 (327 aa).

The interval 1 to 48 (MPPNPTPPRRATTTTTRATSGVRRGEEEQGGMAVSASAGEEEEAFEEV) is disordered. The span at 9–19 (RRATTTTTRAT) shows a compositional bias: low complexity. The span at 39–48 (GEEEEAFEEV) shows a compositional bias: acidic residues. The region spanning 55-314 (GRYADVLGLG…AAELLRDPFF (260 aa)) is the Protein kinase domain. Position 136-139 (136-139 (TEVC)) interacts with ATP. D203 (proton acceptor) is an active-site residue.

This sequence belongs to the protein kinase superfamily. Ser/Thr protein kinase family. WNK subfamily.

It catalyses the reaction L-seryl-[protein] + ATP = O-phospho-L-seryl-[protein] + ADP + H(+). It carries out the reaction L-threonyl-[protein] + ATP = O-phospho-L-threonyl-[protein] + ADP + H(+). The polypeptide is Probable serine/threonine-protein kinase WNK5 (WNK5) (Oryza sativa subsp. japonica (Rice)).